A 422-amino-acid polypeptide reads, in one-letter code: Enolase (422 aa).

Residue glutamine 162 participates in (2R)-2-phosphoglycerate binding. Glutamate 204 (proton donor) is an active-site residue. Mg(2+) is bound by residues aspartate 241, glutamate 284, and aspartate 311. Residues lysine 336, arginine 365, serine 366, and lysine 387 each contribute to the (2R)-2-phosphoglycerate site. Lysine 336 serves as the catalytic Proton acceptor.

This sequence belongs to the enolase family. As to quaternary structure, component of the RNA degradosome, a multiprotein complex involved in RNA processing and mRNA degradation. Mg(2+) is required as a cofactor.

The protein resides in the cytoplasm. Its subcellular location is the secreted. It is found in the cell surface. The catalysed reaction is (2R)-2-phosphoglycerate = phosphoenolpyruvate + H2O. The protein operates within carbohydrate degradation; glycolysis; pyruvate from D-glyceraldehyde 3-phosphate: step 4/5. In terms of biological role, catalyzes the reversible conversion of 2-phosphoglycerate (2-PG) into phosphoenolpyruvate (PEP). It is essential for the degradation of carbohydrates via glycolysis. This Legionella pneumophila (strain Paris) protein is Enolase.